The following is a 1414-amino-acid chain: DNA-directed RNA polymerase subunit beta' (1414 aa).

Residues cysteine 70, cysteine 72, cysteine 85, and cysteine 88 each coordinate Zn(2+). Aspartate 460, aspartate 462, and aspartate 464 together coordinate Mg(2+). Cysteine 814, cysteine 888, cysteine 895, and cysteine 898 together coordinate Zn(2+). Residues 1378–1414 (EREAARQLANPFEDAPVTVGGEPEAPAADTPSDDSAE) form a disordered region.

The protein belongs to the RNA polymerase beta' chain family. As to quaternary structure, the RNAP catalytic core consists of 2 alpha, 1 beta, 1 beta' and 1 omega subunit. When a sigma factor is associated with the core the holoenzyme is formed, which can initiate transcription. Mg(2+) serves as cofactor. Requires Zn(2+) as cofactor.

The catalysed reaction is RNA(n) + a ribonucleoside 5'-triphosphate = RNA(n+1) + diphosphate. In terms of biological role, DNA-dependent RNA polymerase catalyzes the transcription of DNA into RNA using the four ribonucleoside triphosphates as substrates. The sequence is that of DNA-directed RNA polymerase subunit beta' from Bordetella bronchiseptica (strain ATCC BAA-588 / NCTC 13252 / RB50) (Alcaligenes bronchisepticus).